Reading from the N-terminus, the 329-residue chain is Malate dehydrogenase (329 aa).

12 to 18 serves as a coordination point for NAD(+); it reads GAAGQIG. Substrate is bound by residues R93 and R99. NAD(+)-binding positions include N106, Q113, and 130 to 132; that span reads VGN. Residues N132 and R163 each contribute to the substrate site. The active-site Proton acceptor is H188.

The protein belongs to the LDH/MDH superfamily. MDH type 2 family.

It catalyses the reaction (S)-malate + NAD(+) = oxaloacetate + NADH + H(+). In terms of biological role, catalyzes the reversible oxidation of malate to oxaloacetate. In Streptomyces griseus subsp. griseus (strain JCM 4626 / CBS 651.72 / NBRC 13350 / KCC S-0626 / ISP 5235), this protein is Malate dehydrogenase.